The chain runs to 236 residues: Small ribosomal subunit protein uS2c (236 aa).

It belongs to the universal ribosomal protein uS2 family.

Its subcellular location is the plastid. It localises to the chloroplast. This chain is Small ribosomal subunit protein uS2c (rps2), found in Oenothera parviflora (Small-flowered evening primrose).